Consider the following 221-residue polypeptide: NEDD4 family-interacting protein 1 (221 aa).

At Ala2 the chain carries N-acetylalanine. Positions 2–41 (ALALAALAAVEPACGSRYQQLQNEEESGEPEQAAGDAPPP) are interaction with UBE2L3. Residues 2–116 (ALALAALAAV…ADQLRIGNDG (115 aa)) are Cytoplasmic-facing. A disordered region spans residues 18–45 (RYQQLQNEEESGEPEQAAGDAPPPYSSI). 3 short sequence motifs (PPxY motif) span residues 39 to 42 (PPPY), 64 to 67 (PPSY), and 74 to 76 (PSY). Positions 42-76 (YSSISAESAAYFDYKDESGFPKPPSYNVATTLPSY) are interaction with ITCH. A helical transmembrane segment spans residues 117-137 (IFMLTFFMAFLFNWIGFFLSF). At 138–143 (CLTTSA) the chain is on the extracellular side. A helical transmembrane segment spans residues 144–164 (AGRYGAISGFGLSLIKWILIV). The Cytoplasmic portion of the chain corresponds to 165–172 (RFSTYFPG). The helical transmembrane segment at 173–193 (YFDGQYWLWWVFLVLGFLLFL) threads the bilayer. The Extracellular segment spans residues 194–221 (RGFINYAKVRKMPETFSNLPRTRVLFIY).

In terms of assembly, forms heterodimers with NDFIP2. Interacts with several E3 ubiquitin-protein ligases, including ITCH, NEDD4, NEDD4L and WWP2. The interaction with NEDD4, NEDD4L and ITCH leads to relocalization of these proteins to exosomes and eventually to exosomal secretion. Interacts with U2SURP. Interacts with SLC11A2/DMT1. Interacts with PTEN. May interact with phosphorylated EGFR. Interacts with BRAT1. Interacts with KCNH2. Interacts with MAVS. Part of a complex containing ITCH, NDFIP1 and MAP3K7. Interacts (via N-terminus) with UBE2L3; the interaction mediates recruitment of UBE2L3 to ITCH. In terms of processing, ubiquitinated by NEDD4 and ITCH; mono-, di- and polyubiquitinated forms are detected. Ubiquitination regulates its degradation. Post-translationally, undergoes transient tyrosine phosphorylation following EGF stimulation, most probably by catalyzed by SRC. Phosphorylation SRC is enhanced in the presence of NDFIP2 which may act as a scaffold to recruit SRC to NDFIP1. Widely expressed. Higher levels are detected in cerebellum, pituitary, thalamus, kidney, liver, testis, salivary glands and placenta. Also expressed in fetal brain, kidney and lung.

Its subcellular location is the endosome membrane. The protein resides in the golgi apparatus membrane. It localises to the synapse. The protein localises to the synaptosome. It is found in the cell projection. Its subcellular location is the dendrite. The protein resides in the secreted. Functionally, activates HECT domain-containing E3 ubiquitin-protein ligases, including NEDD4 and ITCH, and consequently modulates the stability of their targets. As a result, controls many cellular processes. Prevents chronic T-helper cell-mediated inflammation by activating ITCH and thus controlling JUNB degradation. Promotes pancreatic beta cell death through degradation of JUNB and inhibition of the unfolded protein response, leading to reduction of insulin secretion. Restricts the production of pro-inflammatory cytokines in effector Th17 T-cells by promoting ITCH-mediated ubiquitination and degradation of RORC. Together with NDFIP2, limits the cytokine signaling and expansion of effector Th2 T-cells by promoting degradation of JAK1, probably by ITCH- and NEDD4L-mediated ubiquitination. Regulates peripheral T-cell tolerance to self and foreign antigens, forcing the exit of naive CD4+ T-cells from the cell cycle before they become effector T-cells. Negatively regulates RLR-mediated antiviral response by promoting SMURF1-mediated ubiquitination and subsequent degradation of MAVS. Negatively regulates KCNH2 potassium channel activity by decreasing its cell-surface expression and interfering with channel maturation through recruitment of NEDD4L to the Golgi apparatus where it mediates KCNH2 degradation. In cortical neurons, mediates the ubiquitination of the divalent metal transporter SLC11A2/DMT1 by NEDD4L, leading to its down-regulation and protection of the cells from cobalt and iron toxicity. Important for normal development of dendrites and dendritic spines in cortex. Enhances the ubiquitination of BRAT1 mediated by: NEDD4, NEDD4L and ITCH and is required for the nuclear localization of ubiquitinated BRAT1. Enhances the ITCH-mediated ubiquitination of MAP3K7 by recruiting E2 ubiquitin-conjugating enzyme UBE2L3 to ITCH. Modulates EGFR signaling through multiple pathways. In particular, may regulate the ratio of AKT1-to-MAPK8 signaling in response to EGF, acting on AKT1 probably through PTEN destabilization and on MAPK8 through ITCH-dependent MAP2K4 inactivation. As a result, may control cell growth rate. Inhibits cell proliferation by promoting PTEN nuclear localization and changing its signaling specificity. The protein is NEDD4 family-interacting protein 1 (NDFIP1) of Homo sapiens (Human).